The primary structure comprises 208 residues: Ribosome maturation factor RimP (208 aa).

A disordered region spans residues 189–208; the sequence is EAPETGATTMARDGSEEETK.

Belongs to the RimP family.

The protein localises to the cytoplasm. In terms of biological role, required for maturation of 30S ribosomal subunits. The polypeptide is Ribosome maturation factor RimP (Ruegeria pomeroyi (strain ATCC 700808 / DSM 15171 / DSS-3) (Silicibacter pomeroyi)).